Consider the following 264-residue polypeptide: uncharacterized protein (264 aa).

A helical membrane pass occupies residues 9-29; it reads LVISILSLIATLSISFNIYFI.

The protein resides in the membrane. This is an uncharacterized protein from Ureaplasma parvum serovar 3 (strain ATCC 700970).